A 1244-amino-acid chain; its full sequence is Putative late blight resistance protein homolog R1A-4 (1244 aa).

Coiled coils occupy residues 411 to 434 and 526 to 548; these read RYSD…ESLQ and PRMN…QLLN. The NB-ARC domain occupies 527–755; the sequence is RMNEEIVGFK…ECWEQVANDL (229 aa). ATP is bound at residue 560 to 567; sequence GMPGLGKT. LRR repeat units follow at residues 978 to 1004, 1079 to 1103, 1127 to 1150, 1153 to 1178, and 1213 to 1237; these read LWNL…VWDM, PIRL…ISAP, LKNL…KVSN, FPQL…AFPN, and ESVV…NFKL.

The protein belongs to the disease resistance NB-LRR family.

The protein resides in the cytoplasm. Its subcellular location is the membrane. Confers resistance to late blight (Phytophthora infestans) races carrying the avirulence gene Avr1. Resistance proteins guard the plant against pathogens that contain an appropriate avirulence protein via an indirect interaction with this avirulence protein. That triggers a defense system including the hypersensitive response, which restricts the pathogen growth. This Solanum demissum (Wild potato) protein is Putative late blight resistance protein homolog R1A-4 (R1A-4).